Consider the following 345-residue polypeptide: Phosphoribosylformylglycinamidine cyclo-ligase (345 aa).

This sequence belongs to the AIR synthase family.

The protein resides in the cytoplasm. It catalyses the reaction 2-formamido-N(1)-(5-O-phospho-beta-D-ribosyl)acetamidine + ATP = 5-amino-1-(5-phospho-beta-D-ribosyl)imidazole + ADP + phosphate + H(+). The protein operates within purine metabolism; IMP biosynthesis via de novo pathway; 5-amino-1-(5-phospho-D-ribosyl)imidazole from N(2)-formyl-N(1)-(5-phospho-D-ribosyl)glycinamide: step 2/2. This is Phosphoribosylformylglycinamidine cyclo-ligase from Staphylococcus carnosus (strain TM300).